Consider the following 512-residue polypeptide: Cercosporin MFS transporter CTB4 (512 aa).

12 consecutive transmembrane segments (helical) span residues 72–92 (WVIT…SSVF), 110–130 (VVLG…IFWG), 142–162 (LLAG…ARSL), 170–190 (FLGG…LADI), 202–222 (TVGA…SVLV), 230–250 (WIAN…FPFL), 306–326 (ILLM…NFFL), 343–363 (ASLP…LLSF), 383–403 (LLLM…FAWT), 407–427 (TMNP…IHLI), 456–476 (LFAA…GVKW), and 480–500 (ILAL…YFGA).

It belongs to the major facilitator superfamily. CAR1 family.

It is found in the cell membrane. MFS transporter; part of the gene cluster that mediates the biosynthesis of cercosporin, a light-activated, non-host-selective toxin. The perylenequinone chromophore of cercosporin absorbs light energy to attain an electronically-activated triplet state and produces active oxygen species such as the hydroxyl radical, superoxide, hydrogen peroxide or singlet oxygen upon reaction with oxygen molecules. These reactive oxygen species cause damage to various cellular components including lipids, proteins and nucleic acids. Responsible for secretion and accumulation of cercosporin, but does not play any roles in self-protection against the toxicity of cercosporin. The protein is Cercosporin MFS transporter CTB4 of Cercospora nicotianae (Barn spot disease fungus).